Here is a 268-residue protein sequence, read N- to C-terminus: Resolvase (268 aa).

The 204-residue stretch at Glu-47 to Arg-250 folds into the Tyr recombinase domain. Active-site residues include Arg-82, Lys-114, His-202, Arg-205, and His-228. Tyr-237 functions as the O-(3'-phospho-DNA)-tyrosine intermediate in the catalytic mechanism.

Belongs to the 'phage' integrase family.

In terms of biological role, acts as a repressor of transcription and as a site-specific resolvase that cleaves at the RfsF site. In Escherichia coli (strain K12), this protein is Resolvase (resD).